Reading from the N-terminus, the 294-residue chain is Sarcotoxin-2A (294 aa).

Positions 1–22 are cleaved as a signal peptide; sequence MKSFVFFAACMAIIALSSLVQA. Residues 23–24 constitute a propeptide, removed by a dipeptidylpeptidase; that stretch reads YP. Gln25 carries the pyrrolidone carboxylic acid modification. Arg293 carries the post-translational modification Arginine amide.

It belongs to the attacin/sarcotoxin-2 family. In terms of tissue distribution, synthesized by the fat body and is eventually secreted into the hemolymph.

The protein localises to the secreted. Its function is as follows. Sarcotoxin II is an antibacterial protein which plays a role in the inflammatory response of this insect. The main effect of sarcotoxin II on E.coli may be the inhibition of cell wall synthesis, including septum formation. This is Sarcotoxin-2A from Sarcophaga peregrina (Flesh fly).